Reading from the N-terminus, the 1404-residue chain is DNA-directed RNA polymerase subunit beta' (1404 aa).

Cysteine 70, cysteine 72, cysteine 85, and cysteine 88 together coordinate Zn(2+). Residues aspartate 460, aspartate 462, and aspartate 464 each contribute to the Mg(2+) site. Residues cysteine 814, cysteine 888, cysteine 895, and cysteine 898 each coordinate Zn(2+).

The protein belongs to the RNA polymerase beta' chain family. In terms of assembly, the RNAP catalytic core consists of 2 alpha, 1 beta, 1 beta' and 1 omega subunit. When a sigma factor is associated with the core the holoenzyme is formed, which can initiate transcription. Mg(2+) serves as cofactor. It depends on Zn(2+) as a cofactor.

The catalysed reaction is RNA(n) + a ribonucleoside 5'-triphosphate = RNA(n+1) + diphosphate. Its function is as follows. DNA-dependent RNA polymerase catalyzes the transcription of DNA into RNA using the four ribonucleoside triphosphates as substrates. The protein is DNA-directed RNA polymerase subunit beta' of Shewanella pealeana (strain ATCC 700345 / ANG-SQ1).